A 138-amino-acid chain; its full sequence is Basic phospholipase A2 Bs-N6 (138 aa).

Positions 1–16 (MRTLWIVAVLLVGVEG) are cleaved as a signal peptide. Intrachain disulfides connect C42–C131, C44–C60, C59–C111, C65–C138, C66–C104, C73–C97, and C91–C102. Residues Y43, G45, and G47 each contribute to the Ca(2+) site. H63 is a catalytic residue. D64 contacts Ca(2+). Residue D105 is part of the active site.

Monomer. Ca(2+) is required as a cofactor. Post-translationally, contains 7 disulfide bonds. As to expression, expressed by the venom gland.

The protein localises to the secreted. The enzyme catalyses a 1,2-diacyl-sn-glycero-3-phosphocholine + H2O = a 1-acyl-sn-glycero-3-phosphocholine + a fatty acid + H(+). Snake venom phospholipase A2 (PLA2) that shows myotoxic activities. PLA2 catalyzes the calcium-dependent hydrolysis of the 2-acyl groups in 3-sn-phosphoglycerides. This Bothriechis schlegelii (Eyelash palm pitviper) protein is Basic phospholipase A2 Bs-N6.